Consider the following 38-residue polypeptide: Zinc-containing ferredoxin (38 aa).

The span at 1 to 11 shows a compositional bias: polar residues; the sequence is GIDPNFRTSRP. The disordered stretch occupies residues 1 to 38; that stretch reads GIDPNFRTSRPVTGDHAGHKVYAPADPPVKEKALGIHG. The N-terminal extension stretch occupies residues 1–38; the sequence is GIDPNFRTSRPVTGDHAGHKVYAPADPPVKEKALGIHG. Residues His16 and His19 each coordinate Zn(2+). The span at 28 to 38 shows a compositional bias: basic and acidic residues; that stretch reads PVKEKALGIHG. Position 30 is an N6-methyllysine (Lys30). His37 contributes to the Zn(2+) binding site.

The cofactor is [3Fe-4S] cluster. Requires [4Fe-4S] cluster as cofactor. It depends on Zn(2+) as a cofactor.

Ferredoxins are iron-sulfur proteins that transfer electrons in a wide variety of metabolic reactions. The polypeptide is Zinc-containing ferredoxin (zfx) (Metallosphaera prunae).